The primary structure comprises 371 residues: Peptide chain release factor 2 (371 aa).

An N5-methylglutamine modification is found at Gln252.

It belongs to the prokaryotic/mitochondrial release factor family. Methylated by PrmC. Methylation increases the termination efficiency of RF2.

Its subcellular location is the cytoplasm. In terms of biological role, peptide chain release factor 2 directs the termination of translation in response to the peptide chain termination codons UGA and UAA. The polypeptide is Peptide chain release factor 2 (Staphylococcus epidermidis (strain ATCC 35984 / DSM 28319 / BCRC 17069 / CCUG 31568 / BM 3577 / RP62A)).